Reading from the N-terminus, the 432-residue chain is MHYLNISFSHKNSTLDVREKLSYKDDYATKGCLSKLNSGESINESILISTCNRMEVFCSCSDIASATKHIFEMLAARSGVSIDELEGRADIFDDSSAIHHLFSVASSLDSMVIGETQIAGQLKDAFRFSYDNGFCSQKLARAMHHAFKCAAKVRNATDISSKPVSIASVAVSKLKSVLDNVEGKKALVIGVGEMSEITAKHLLSSGADVYITNRTKHKAEKLASECGAKVLDMQDLHKAVNEFEILFTATSSSEPIITDEIIKPCDFDRYWFDMAVPRDINYHKGDRINLYVVDDLKNIVDQNMSFREDGARKAHGIIGRSTVEFFEWLNTLNIEPMIKEIYEKAFEAARIESQRVIKKGFIPKEYEDQIHKMSQQVLKRFLHQMSSKMRSVSEESKADMLTSAVQFLIEKDQRDIPDKYKCEHALNIIEGR.

Substrate-binding positions include 50-53 (TCNR), Ser110, 115-117 (ETQ), and Gln121. The active-site Nucleophile is Cys51. Position 190–195 (190–195 (GVGEMS)) interacts with NADP(+).

This sequence belongs to the glutamyl-tRNA reductase family. In terms of assembly, homodimer.

It catalyses the reaction (S)-4-amino-5-oxopentanoate + tRNA(Glu) + NADP(+) = L-glutamyl-tRNA(Glu) + NADPH + H(+). Its pathway is porphyrin-containing compound metabolism; protoporphyrin-IX biosynthesis; 5-aminolevulinate from L-glutamyl-tRNA(Glu): step 1/2. In terms of biological role, catalyzes the NADPH-dependent reduction of glutamyl-tRNA(Glu) to glutamate 1-semialdehyde (GSA). The sequence is that of Glutamyl-tRNA reductase from Sulfurimonas denitrificans (strain ATCC 33889 / DSM 1251) (Thiomicrospira denitrificans (strain ATCC 33889 / DSM 1251)).